The primary structure comprises 93 residues: Bublin coiled-coil protein (93 aa).

Disordered regions lie at residues methionine 1–phenylalanine 26 and glutamine 74–alanine 93. A compositionally biased stretch (acidic residues) spans aspartate 17–phenylalanine 26. Positions leucine 59–leucine 80 form a coiled coil.

This sequence belongs to the UPF0184 (EST00098) family.

Its subcellular location is the cell junction. It is found in the cytoplasm. The protein resides in the cytoskeleton. Its function is as follows. Essential for intermediate filament organization in intestinal cells, interacts with intermediate filament and regulates intestinal lumen morphology. This chain is Bublin coiled-coil protein (BBLN), found in Taeniopygia guttata (Zebra finch).